The sequence spans 329 residues: ATP-dependent (S)-NAD(P)H-hydrate dehydratase (329 aa).

Residues 35 to 326 (TLQLVRNIIP…AEVGAAFSKL (292 aa)) form the YjeF C-terminal domain. A Phosphotyrosine modification is found at Tyr67. (6S)-NADPHX is bound by residues Gly135 and 188–194 (NHMEFSR). Residues Asn207 and Asn222 are each glycosylated (N-linked (GlcNAc...) asparagine). ATP is bound by residues 228-232 (KGERD) and 247-256 (GSSRRCGGQG). Asp257 is a (6S)-NADPHX binding site. N-linked (GlcNAc...) asparagine glycosylation is present at Asn279.

It belongs to the NnrD/CARKD family. The cofactor is Mg(2+).

The protein localises to the mitochondrion. The catalysed reaction is (6S)-NADHX + ATP = ADP + phosphate + NADH + H(+). It carries out the reaction (6S)-NADPHX + ATP = ADP + phosphate + NADPH + H(+). Functionally, catalyzes the dehydration of the S-form of NAD(P)HX at the expense of ATP, which is converted to ADP. Together with NAD(P)HX epimerase, which catalyzes the epimerization of the S- and R-forms, the enzyme allows the repair of both epimers of NAD(P)HX, a damaged form of NAD(P)H that is a result of enzymatic or heat-dependent hydration. This is ATP-dependent (S)-NAD(P)H-hydrate dehydratase from Pongo abelii (Sumatran orangutan).